Here is a 173-residue protein sequence, read N- to C-terminus: Small ribosomal subunit protein uS9 (173 aa).

Polar residues predominate over residues 1 to 15 (MTDTPTENLENTEVT). Disordered regions lie at residues 1–26 (MTDT…EIAY) and 135–173 (EASR…YSKR). Residues 154-173 (KERKKAGLKKARKAPQYSKR) show a composition bias toward basic residues.

Belongs to the universal ribosomal protein uS9 family.

The polypeptide is Small ribosomal subunit protein uS9 (Cutibacterium acnes (strain DSM 16379 / KPA171202) (Propionibacterium acnes)).